Reading from the N-terminus, the 627-residue chain is Neuronal acetylcholine receptor subunit alpha-4 (627 aa).

An N-terminal signal peptide occupies residues 1 to 31 (MELGGPGAPPPPLLPPLLLLLGAGFLPASSP). The Extracellular portion of the chain corresponds to 32–244 (VETRAHAEER…ITYAFVIRRL (213 aa)). Residue Asn-59 is glycosylated (N-linked (GlcNAc...) asparagine). Val-78 and Glu-80 together coordinate Ca(2+). 2 N-linked (GlcNAc...) asparagine glycosylation sites follow: Asn-109 and Asn-176. Disulfide bonds link Cys-163–Cys-177 and Cys-227–Cys-228. The chain crosses the membrane as a helical span at residues 245 to 269 (PLFYTINLIVPCLLISCLTVLVFYL). Cys-273 is lipidated: S-palmitoyl cysteine. A run of 2 helical transmembrane segments spans residues 277–295 (VTLC…LLIT) and 311–332 (YLLF…VLNV). The Cytoplasmic portion of the chain corresponds to 333 to 600 (HHRSPRTHTM…WKYVAMVIDR (268 aa)). A compositionally biased stretch (low complexity) spans 384–399 (PGFWPEPEGEPGVVSG). Residues 384–463 (PGFWPEPEGE…PPPSTRAPGL (80 aa)) form a disordered region. A Phosphoserine modification is found at Ser-427. Over residues 444-458 (SPCPLPDSCRPPPST) the composition is skewed to pro residues. Ser-541 is modified (phosphoserine). A helical transmembrane segment spans residues 601–619 (IFLWVFVIVCLLGTAGLFL).

This sequence belongs to the ligand-gated ion channel (TC 1.A.9) family. Acetylcholine receptor (TC 1.A.9.1) subfamily. Alpha-4/CHRNA4 sub-subfamily. As to quaternary structure, neuronal AChR is composed of two different types of subunits: alpha and beta. CHRNA4 forms heteropentameric neuronal acetylcholine receptors with CHRNB2 and CHRNB4, as well as CHRNA5 and CHRNB3 as accesory subunits. Found in two major stoichiometric forms, LS (low agonist sensitivity): (CHRNA4)3:(CHRNB2)2 and HS (high agonist sensitivity): (CHRNA4)2:(CHRNB2)3, the two stoichiometric forms differ in their unitary conductance, calcium permeability, ACh sensitivity and potentiation by divalent cation. Cells produce predominantly an (CHRNA4)3:(CHRNB2)2 nAChR. The (CHRNA4)2:(CHRNB2)3 expression is selectively up-regulated by nicotine and has lower single channel conductance and calcium permeability. In the striatum, also forms CHRNA4:CHRNA6:CHRNB2 complexes. Also found in the stoichiometric form: (CHRNA4:CHRNB2)2:CHRNB3. Interacts with RIC3; which is required for proper folding and assembly. Interacts with LYPD6.

Its subcellular location is the synaptic cell membrane. The protein localises to the cell membrane. The catalysed reaction is Ca(2+)(in) = Ca(2+)(out). It carries out the reaction K(+)(in) = K(+)(out). The enzyme catalyses Na(+)(in) = Na(+)(out). Its activity is regulated as follows. Activated by a myriad of ligands such as acetylcholine, cytisine, nicotine, choline and epibatidine. Channel potentiation by calcium is stoichiometry-selective, CHRNA4:CHRNB2 nACh receptor is achieved by calcium association with topographically distinct sites framed by anionic residues within the CHRNA4 subunit and between the CHRNA4 and CHRNB2 subunits. nAChR activity is inhibited by the antagonist alpha-conotoxins BuIA, PnIA, GID and MII, small disulfide-constrained peptides from cone snails. Component of neuronal acetylcholine receptors (nAChRs) that function as pentameric, ligand-gated cation channels with high calcium permeability among other activities. nAChRs are excitatory neurotrasnmitter receptors formed by a collection of nAChR subunits known to mediate synaptic transmission in the nervous system and the neuromuscular junction. Each nAchR subunit confers differential attributes to channel properties, including activation, deactivation and desensitization kinetics, pH sensitivity, cation permeability, and binding to allosteric modulators. CHRNA4 forms heteropentameric neuronal acetylcholine receptors with CHRNB2 and CHRNB4, as well as CHRNA5 and CHRNB3 as accesory subunits. Is the most abundant nAChR subtype expressed in the central nervous system. Found in two major stoichiometric forms,(CHRNA4)3:(CHRNB2)2 and (CHRNA4)2:(CHRNB2)3, the two stoichiometric forms differ in their unitary conductance, calcium permeability, ACh sensitivity and potentiation by divalent cation. Involved in the modulation of calcium-dependent signaling pathways, influences the release of neurotransmitters, including dopamine, glutamate and GABA. This chain is Neuronal acetylcholine receptor subunit alpha-4 (CHRNA4), found in Mustela putorius furo (European domestic ferret).